Here is a 451-residue protein sequence, read N- to C-terminus: MKNNDTIAAIATPPGRGGIGIVRISGTNLEQLAQTILGKLPDPRHAGLFNFLDQNNQVIDQGIVLYFPSPNSYTGEDVLELHGHGGPAVMNLLLTRCLQLGARLAEPGEFTLRAFLNEKLDLAQAEGVADLIEASTANAARCAVRSLHGEFSSAIHQLVSALIDLRVLVEATLDFPEEEIDFLQSAHAVEQLASIQTKLEQVLSASRRGNLLQEGIKVVLTGQPNVGKSSLLNRLAGDEIAIVTEIPGTTRDTIRQSIEIEGIPLHLIDTAGLRETSDIVEQHGIARAYAAIEQADLVLLLVDGRYGVTKEDHSVLARLPKELPVLTVHNKIDLSGQLSRIEEDTSGTAIYLSVKSGEGIELLRTVLLKTVGWQTNIAGEGAYMARQRHLQALLHAKELLKRAETWLHTADQLEILAEELRLAQQALSSITGEFTSDDLLGEIFSNFCIGK.

(6S)-5-formyl-5,6,7,8-tetrahydrofolate-binding residues include Arg-23, Glu-80, and Lys-119. The TrmE-type G domain occupies Gly-215–Gly-372. Asn-225 provides a ligand contact to K(+). GTP contacts are provided by residues Asn-225–Ser-230, Thr-244–Thr-250, and Asp-269–Gly-272. Mg(2+) is bound at residue Ser-229. K(+)-binding residues include Thr-244, Ile-246, and Thr-249. Position 250 (Thr-250) interacts with Mg(2+). Residue Lys-451 coordinates (6S)-5-formyl-5,6,7,8-tetrahydrofolate.

This sequence belongs to the TRAFAC class TrmE-Era-EngA-EngB-Septin-like GTPase superfamily. TrmE GTPase family. As to quaternary structure, homodimer. Heterotetramer of two MnmE and two MnmG subunits. Requires K(+) as cofactor.

The protein localises to the cytoplasm. Its function is as follows. Exhibits a very high intrinsic GTPase hydrolysis rate. Involved in the addition of a carboxymethylaminomethyl (cmnm) group at the wobble position (U34) of certain tRNAs, forming tRNA-cmnm(5)s(2)U34. This Nitrosomonas eutropha (strain DSM 101675 / C91 / Nm57) protein is tRNA modification GTPase MnmE.